A 1096-amino-acid chain; its full sequence is Cohesin subunit scc-3 (1096 aa).

A compositionally biased stretch (polar residues) spans 1-21; the sequence is MSETPTDQSPQRMSTRNQARV. Disordered stretches follow at residues 1 to 53 and 67 to 106; these read MSET…KKRA and NLNN…ESAE. Residues 261 to 312 are a coiled coil; that stretch reads IELTQSKEKTSKQIEAEKAKLKNNSAGNEKYEALVAQRTQTEERAEEIRQII. The SCD domain occupies 320–405; sequence FVHRYRDVVP…NKFKDRLVSM (86 aa). A disordered region spans residues 1057–1096; that stretch reads DNMSVRSGMTVTSNATMRSTASSTRGRGRGRGRSRIADDF. The span at 1060–1073 shows a compositional bias: polar residues; it reads SVRSGMTVTSNATM.

Belongs to the SCC3 family. In terms of assembly, component of the cohesin complex, composed of the smc-1 and smc-3 heterodimer attached via their hinge domain, scc-1 which links them, and scc-3. Interacts with scc-1, smc-1 and tim-1. In terms of tissue distribution, expressed in gonadal cells.

The protein localises to the nucleus. It localises to the chromosome. In terms of biological role, component of the cohesin complex, a complex required for the cohesion of sister chromatids after DNA replication. The cohesin complex apparently forms a large proteinaceous ring within which sister chromatids can be trapped. At anaphase, the scc-1 subunit of the complex is cleaved and dissociates from chromatin, allowing sister chromatids to segregate. The cohesin complex may also play a role in spindle pole assembly during mitosis. Plays an essential role in cell division during embryonic development. Required for the assembly of the synaptonemal complex between homologous chromosomes to promote sister chromatid cohesion during mitosis and meiosis. Has a role in stabilization of homologous chromosome associations during meiotic synapsis. Required for chromosome segregation during mitosis and meiosis. Plays a role in DNA double-strand break (DSB) repair during meiotic recombination and promotes the assembly of the 9-1-1 cell-cycle checkpoint response complex which is required for inducing apoptosis in response to DNA damage, at DNA damage sites. The sequence is that of Cohesin subunit scc-3 from Caenorhabditis elegans.